The sequence spans 65 residues: Large ribosomal subunit protein bL35 (65 aa).

The disordered stretch occupies residues 1 to 46 (MPKMKTRQSAAKRYEVTGSGKLRRRRAGKNHLLQHKSAARKRSLST). Residues 21 to 44 (KLRRRRAGKNHLLQHKSAARKRSL) are compositionally biased toward basic residues.

The protein belongs to the bacterial ribosomal protein bL35 family.

This Gloeobacter violaceus (strain ATCC 29082 / PCC 7421) protein is Large ribosomal subunit protein bL35.